The chain runs to 355 residues: Peptide chain release factor 1 (355 aa).

Q233 is modified (N5-methylglutamine). Basic and acidic residues predominate over residues 280–293 (ERRKKEQERADSRR). Residues 280 to 306 (ERRKKEQERADSRRGQVGSGNRSERIR) are disordered.

The protein belongs to the prokaryotic/mitochondrial release factor family. Methylated by PrmC. Methylation increases the termination efficiency of RF1.

Its subcellular location is the cytoplasm. Its function is as follows. Peptide chain release factor 1 directs the termination of translation in response to the peptide chain termination codons UAG and UAA. The sequence is that of Peptide chain release factor 1 from Rickettsia africae (strain ESF-5).